The primary structure comprises 91 residues: Small ribosomal subunit protein bS20 (91 aa).

Residues Met-1–Asn-21 show a composition bias toward basic and acidic residues. Disordered stretches follow at residues Met-1–Lys-25 and Pro-70–Glu-91. Residues Pro-70–Gln-79 show a composition bias toward basic residues.

It belongs to the bacterial ribosomal protein bS20 family.

Binds directly to 16S ribosomal RNA. The sequence is that of Small ribosomal subunit protein bS20 from Chlorobium phaeobacteroides (strain BS1).